Consider the following 843-residue polypeptide: Protein P (843 aa).

Positions 1–177 are terminal protein domain (TP); the sequence is MPLSYQHFRK…FCGSPYSWEQ (177 aa). Residues 178-346 are spacer; that stretch reads DLQHGRLVFQ…YCLCHIVNLI (169 aa). The tract at residues 220-265 is disordered; that stretch reads QSRLGPQPAQGQLAGRQQGGSGSIRARVHPSPWGTVGVEPSGSGPT. A compositionally biased stretch (low complexity) spans 223–235; that stretch reads LGPQPAQGQLAGR. The polymerase/reverse transcriptase domain (RT) stretch occupies residues 347 to 690; that stretch reads EDWGPCTEHG…YLNLYPVARQ (344 aa). The region spanning 357–600 is the Reverse transcriptase domain; the sequence is EHLIRTPRTP…YSLNFMGYVI (244 aa). The Mg(2+) site is built by aspartate 429, aspartate 551, and aspartate 552.

This sequence belongs to the hepadnaviridae P protein family.

The enzyme catalyses DNA(n) + a 2'-deoxyribonucleoside 5'-triphosphate = DNA(n+1) + diphosphate. It catalyses the reaction Endonucleolytic cleavage to 5'-phosphomonoester.. Activated by host HSP70 and HSP40 in vitro to be able to bind the epsilon loop of the pgRNA. Because deletion of the RNase H region renders the protein partly chaperone-independent, the chaperones may be needed indirectly to relieve occlusion of the RNA-binding site by this domain. Inhibited by several reverse-transcriptase inhibitors: Lamivudine, Adefovir and Entecavir. Multifunctional enzyme that converts the viral RNA genome into dsDNA in viral cytoplasmic capsids. This enzyme displays a DNA polymerase activity that can copy either DNA or RNA templates, and a ribonuclease H (RNase H) activity that cleaves the RNA strand of RNA-DNA heteroduplexes in a partially processive 3'- to 5'-endonucleasic mode. Neo-synthesized pregenomic RNA (pgRNA) are encapsidated together with the P protein, and reverse-transcribed inside the nucleocapsid. Initiation of reverse-transcription occurs first by binding the epsilon loop on the pgRNA genome, and is initiated by protein priming, thereby the 5'-end of (-)DNA is covalently linked to P protein. Partial (+)DNA is synthesized from the (-)DNA template and generates the relaxed circular DNA (RC-DNA) genome. After budding and infection, the RC-DNA migrates in the nucleus, and is converted into a plasmid-like covalently closed circular DNA (cccDNA). The activity of P protein does not seem to be necessary for cccDNA generation, and is presumably released from (+)DNA by host nuclear DNA repair machinery. This is Protein P from Hepatitis B virus genotype B2 (isolate Vietnam/9873/1997) (HBV-B).